The following is a 415-amino-acid chain: Cyclin-A2 (415 aa).

It belongs to the cyclin family. Cyclin AB subfamily. In terms of assembly, interacts with the CDK1 and CDK2 protein kinases to form serine/threonine kinase holoenzyme complexes. Ubiquitous.

It is found in the nucleus. Its subcellular location is the cytoplasm. Cyclin which controls both the G1/S and the G2/M transition phases of the cell cycle. Functions through the formation of specific serine/threonine kinase holoenzyme complexes with the cyclin-dependent protein kinases CDK1 and CDK2. The cyclin subunit confers the substrate specificity of these complexes and differentially interacts with and activates CDK1 and CDK2 throughout the cell cycle. In Xenopus laevis (African clawed frog), this protein is Cyclin-A2 (ccna2).